Consider the following 151-residue polypeptide: Protein Turandot Z (151 aa).

An N-terminal signal peptide occupies residues 1–23; the sequence is MSRLIHLSFVLALLACLTGTISA.

Belongs to the Turandot family.

The protein localises to the secreted. In terms of biological role, a humoral factor that may play a role in stress tolerance. This is Protein Turandot Z from Drosophila persimilis (Fruit fly).